An 86-amino-acid polypeptide reads, in one-letter code: Large ribosomal subunit protein uL23 (86 aa).

This sequence belongs to the universal ribosomal protein uL23 family. As to quaternary structure, part of the 50S ribosomal subunit. Contacts protein L29.

Binds to 23S rRNA. One of the proteins that surrounds the polypeptide exit tunnel on the outside of the ribosome. The polypeptide is Large ribosomal subunit protein uL23 (Methanococcus maripaludis (strain C7 / ATCC BAA-1331)).